We begin with the raw amino-acid sequence, 340 residues long: Ferrochelatase (340 aa).

Positions 218 and 298 each coordinate Fe cation.

This sequence belongs to the ferrochelatase family.

The protein localises to the cytoplasm. The catalysed reaction is heme b + 2 H(+) = protoporphyrin IX + Fe(2+). The protein operates within porphyrin-containing compound metabolism; protoheme biosynthesis; protoheme from protoporphyrin-IX: step 1/1. Functionally, catalyzes the ferrous insertion into protoporphyrin IX. The protein is Ferrochelatase of Wolbachia sp. subsp. Brugia malayi (strain TRS).